A 314-amino-acid chain; its full sequence is uncharacterized protein (314 aa).

Composition is skewed to basic residues over residues 1 to 16 (MAGNSKRRGAVRKAGT) and 49 to 65 (AAKRAAKAAKQQQRRPA). Residues 1-73 (MAGNSKRRGA…PARKTDETEL (73 aa)) are disordered. 3 residues coordinate S-adenosyl-L-methionine: Gly-266, Ile-286, and Leu-295.

Belongs to the class IV-like SAM-binding methyltransferase superfamily. RNA methyltransferase TrmH family.

This is an uncharacterized protein from Mycobacterium sp. (strain KMS).